The following is a 210-amino-acid chain: 3-hexulose-6-phosphate synthase (210 aa).

Belongs to the HPS/KGPDC family. HPS subfamily.

The enzyme catalyses D-ribulose 5-phosphate + formaldehyde = D-arabino-hex-3-ulose 6-phosphate. The protein operates within one-carbon metabolism; formaldehyde assimilation via RuMP pathway; D-fructose 6-phosphate from D-ribulose 5-phosphate and formaldehyde: step 1/2. Its function is as follows. Catalyzes the condensation of ribulose 5-phosphate with formaldehyde to form 3-hexulose 6-phosphate. In Staphylococcus aureus (strain NCTC 8325 / PS 47), this protein is 3-hexulose-6-phosphate synthase.